Here is a 603-residue protein sequence, read N- to C-terminus: MFLPTTKEEMDEWGWEELDIIIVTGDAYIDHYLFGASVVGRYLVEHGYRVGIIAQPDWKNLDDIKRLGKPNYFFAVTAGNLDSMLAHYTPQKRLRDFDSMSNEGIRKRPDRATIVYTNLIKRAFKGVPIALGGIEASLRRFSHYDYWDNKVRKSVLIDSKADILMYGMGEKSILAITKALESGENIKDLEINGTVVRVNERKIGDIKERYETKELPSHEEVVNSKEKYAEMHRKLMTMDKVIYQKVGNQYLVQFPPIYLTEKEMDEIYEMPFERRAHPSYSYVPGIVPVQFSVVTHRGCFGGCSFCSILHHQGKVIQNRSERSILKEIRKLLNHEDFKGVIQDIGAPTANMYRMGCKKGLADRCPKNCLYPEPCENLIINHKPLIKLYRKIRDIVGDDVRVYVRSGVRYDLIMYDEEYGEDYIKELSKYHVSGRLKVAPEHISKKVCKAIQKPDGRLFKKFLEKYREIAEKVGGIKEVLPYWLIAHPNCSIKEMIELAEFIHKNNCYSRQVQVFTPTPMTLSTTMYHTGINPITNEKVYVPYTYREKKIQKAICLYREEENWEKALEGFKMVGYKGVIYRWIMEQMEKKKKQKKDKNKKNRLN.

The region spanning glycine 285–arginine 557 is the Radical SAM core domain. [4Fe-4S] cluster-binding residues include cysteine 299, cysteine 303, and cysteine 306.

Belongs to the UPF0313 family. [4Fe-4S] cluster is required as a cofactor.

This is UPF0313 protein MJ1155 from Methanocaldococcus jannaschii (strain ATCC 43067 / DSM 2661 / JAL-1 / JCM 10045 / NBRC 100440) (Methanococcus jannaschii).